We begin with the raw amino-acid sequence, 601 residues long: Glutathione-regulated potassium-efflux system protein KefB (601 aa).

13 consecutive transmembrane segments (helical) span residues 5–25, 29–49, 55–75, 87–107, 115–135, 152–172, 181–201, 207–227, 230–250, 268–288, 291–311, 324–344, and 356–376; these read DLLLAGILFLFAAVVAVPIAA, IGAVLGYLLAGIAIGPWGLGF, EILHFSELGVVFLMFLIGLEL, IFGIGAAQVLLSAVVLAGLLM, AAVVGGIGLAMSSTAMALQLM, VLLFQDLAVIPALAMVPLLAG, LKIGMKVLAFAVMLVGGRYLL, FIAGSGVREVFTAAALLLVLG, LFMDLLGLSMALGTFIAGILL, GLLLGLFFISVGMALNLGVLY, ILWVVMSVVVLVSVKMAVLYG, LPFAGVLSQGGEFAFVLFSSA, and ALLLVTVTLSMMTTPLVMKGI. Residues 400 to 519 form the RCK N-terminal domain; sequence KPQVIIVGFG…AGVKQFSRET (120 aa).

Belongs to the monovalent cation:proton antiporter 2 (CPA2) transporter (TC 2.A.37) family. KefB subfamily. Interacts with the regulatory subunit KefG.

It localises to the cell inner membrane. Its function is as follows. Pore-forming subunit of a potassium efflux system that confers protection against electrophiles. Catalyzes K(+)/H(+) antiport. In Cronobacter sakazakii (strain ATCC BAA-894) (Enterobacter sakazakii), this protein is Glutathione-regulated potassium-efflux system protein KefB.